A 238-amino-acid chain; its full sequence is Large ribosomal subunit protein uL5c (238 aa).

It belongs to the universal ribosomal protein uL5 family. Part of the 50S ribosomal subunit; contacts the 5S rRNA.

It localises to the plastid. It is found in the chloroplast. Binds 5S rRNA, forms part of the central protuberance of the 50S subunit. The sequence is that of Large ribosomal subunit protein uL5c (rpl5) from Thalassiosira pseudonana (Marine diatom).